Here is a 245-residue protein sequence, read N- to C-terminus: Orotidine 5'-phosphate decarboxylase (245 aa).

Substrate-binding positions include D22, K44, 71-80 (DLKFHDIPNT), T131, R192, Q201, G221, and R222. Residue K73 is the Proton donor of the active site.

This sequence belongs to the OMP decarboxylase family. Type 1 subfamily. Homodimer.

The enzyme catalyses orotidine 5'-phosphate + H(+) = UMP + CO2. It functions in the pathway pyrimidine metabolism; UMP biosynthesis via de novo pathway; UMP from orotate: step 2/2. In terms of biological role, catalyzes the decarboxylation of orotidine 5'-monophosphate (OMP) to uridine 5'-monophosphate (UMP). The protein is Orotidine 5'-phosphate decarboxylase of Salmonella typhimurium (strain LT2 / SGSC1412 / ATCC 700720).